The chain runs to 178 residues: MKEIRGKKLKLLLKEEDIKRRVKELAKEIESSYSWEEPIVVVGLLKGAFIFLADLVRAFDRFVFVEFMQVSSYGKGMKSSGTIKIVKDLDMDIEGKEVLLVDDILDTGLTMKEIHDYLLMKKPKVLKTCVFLDKKERRKVDFNADFVGFEVPDKFLVGYGLDWGEYGRNLPEVYMVED.

Lys-46 and Gly-47 together coordinate diphosphate. Asp-103 is a Mg(2+) binding site. The active-site Proton acceptor is Asp-106. Residues Lys-134, Phe-155–Leu-156, and Asp-162 contribute to the GMP site. Diphosphate is bound at residue Arg-168.

The protein belongs to the purine/pyrimidine phosphoribosyltransferase family. Requires Mg(2+) as cofactor.

Its subcellular location is the cytoplasm. The enzyme catalyses IMP + diphosphate = hypoxanthine + 5-phospho-alpha-D-ribose 1-diphosphate. It carries out the reaction GMP + diphosphate = guanine + 5-phospho-alpha-D-ribose 1-diphosphate. The protein operates within purine metabolism; IMP biosynthesis via salvage pathway; IMP from hypoxanthine: step 1/1. Its pathway is purine metabolism; GMP biosynthesis via salvage pathway; GMP from guanine: step 1/1. Purine salvage pathway enzyme that catalyzes the transfer of the ribosyl-5-phosphate group from 5-phospho-alpha-D-ribose 1-diphosphate (PRPP) to the N9 position of the 6-oxopurines hypoxanthine and guanine to form the corresponding ribonucleotides IMP (inosine 5'-monophosphate) and GMP (guanosine 5'-monophosphate), with the release of PPi. The polypeptide is Hypoxanthine-guanine phosphoribosyltransferase (hpt) (Aquifex aeolicus (strain VF5)).